A 137-amino-acid chain; its full sequence is Large ribosomal subunit protein uL16 (137 aa).

Belongs to the universal ribosomal protein uL16 family. As to quaternary structure, part of the 50S ribosomal subunit.

Functionally, binds 23S rRNA and is also seen to make contacts with the A and possibly P site tRNAs. The sequence is that of Large ribosomal subunit protein uL16 from Nitrobacter winogradskyi (strain ATCC 25391 / DSM 10237 / CIP 104748 / NCIMB 11846 / Nb-255).